Here is a 229-residue protein sequence, read N- to C-terminus: Small ribosomal subunit protein uS3 (229 aa).

The KH type-2 domain maps to 39–107; sequence VRKFLEKKLK…PAQINIAEIR (69 aa).

The protein belongs to the universal ribosomal protein uS3 family. Part of the 30S ribosomal subunit. Forms a tight complex with proteins S10 and S14.

Its function is as follows. Binds the lower part of the 30S subunit head. Binds mRNA in the 70S ribosome, positioning it for translation. In Shewanella loihica (strain ATCC BAA-1088 / PV-4), this protein is Small ribosomal subunit protein uS3.